Reading from the N-terminus, the 930-residue chain is Translation initiation factor IF-2 (930 aa).

A compositionally biased stretch (low complexity) spans 50 to 67; sequence FKPAAAPKVEAKPAAPKV. Disordered regions lie at residues 50 to 217 and 260 to 346; these read FKPA…SSEE and EVVP…HELP. Composition is skewed to basic and acidic residues over residues 68–90 and 110–125; these read SAEKKAEKSEPAKPAVAKEEAKP and FKAEREARAKEQAERR. The span at 129–141 shows a compositional bias: low complexity; it reads KGNNRDQQQNGNR. 2 stretches are compositionally biased toward basic and acidic residues: residues 157-167 and 262-295; these read RDNRRFNDQAK and VPEKKEPAVDTRRKKQARPDKNRDDYDHEEDGPR. Positions 309–318 are enriched in low complexity; it reads NQKNSNWNNN. Basic and acidic residues predominate over residues 337–346; that stretch reads VTERKFHELP. Residues 432 to 599 form the tr-type G domain; that stretch reads ERPPVVTIMG…TVLLVAEIQE (168 aa). Residues 441 to 448 are G1; the sequence is GHVDHGKT. A GTP-binding site is contributed by 441–448; that stretch reads GHVDHGKT. The tract at residues 466 to 470 is G2; it reads GITQH. Residues 487–490 form a G3 region; the sequence is DTPG. Residues 487–491 and 541–544 each bind GTP; these read DTPGH and NKID. The interval 541–544 is G4; sequence NKID. The segment at 577–579 is G5; it reads SAK.

The protein belongs to the TRAFAC class translation factor GTPase superfamily. Classic translation factor GTPase family. IF-2 subfamily.

The protein resides in the cytoplasm. Its function is as follows. One of the essential components for the initiation of protein synthesis. Protects formylmethionyl-tRNA from spontaneous hydrolysis and promotes its binding to the 30S ribosomal subunits. Also involved in the hydrolysis of GTP during the formation of the 70S ribosomal complex. The sequence is that of Translation initiation factor IF-2 from Streptococcus pneumoniae (strain P1031).